A 138-amino-acid chain; its full sequence is Large ribosomal subunit protein uL16 (138 aa).

Residues 1 to 13 show a composition bias toward basic residues; it reads MLQPSRRKYRKEQ. The tract at residues 1 to 22 is disordered; that stretch reads MLQPSRRKYRKEQKGRNTGLAT.

Belongs to the universal ribosomal protein uL16 family. As to quaternary structure, part of the 50S ribosomal subunit.

In terms of biological role, binds 23S rRNA and is also seen to make contacts with the A and possibly P site tRNAs. The sequence is that of Large ribosomal subunit protein uL16 from Bordetella petrii (strain ATCC BAA-461 / DSM 12804 / CCUG 43448).